A 211-amino-acid polypeptide reads, in one-letter code: Thymidylate kinase (211 aa).

Residue 11–18 participates in ATP binding; that stretch reads GPDGAGKT.

The protein belongs to the thymidylate kinase family.

It carries out the reaction dTMP + ATP = dTDP + ADP. Functionally, phosphorylation of dTMP to form dTDP in both de novo and salvage pathways of dTTP synthesis. The chain is Thymidylate kinase from Streptococcus pyogenes serotype M6 (strain ATCC BAA-946 / MGAS10394).